A 291-amino-acid polypeptide reads, in one-letter code: Phosphatidylglycerol--prolipoprotein diacylglyceryl transferase (291 aa).

Helical transmembrane passes span 21-41 (VALH…MWLA), 60-80 (LLYA…VLFY), 96-116 (WDGG…MIIF), 130-150 (FIAP…FING), 198-218 (SQLY…NLFI), 225-245 (GAVS…VEFF), and 260-280 (ISMG…MMVW). Position 143 (R143) interacts with a 1,2-diacyl-sn-glycero-3-phospho-(1'-sn-glycerol).

Belongs to the Lgt family.

It localises to the cell inner membrane. The enzyme catalyses L-cysteinyl-[prolipoprotein] + a 1,2-diacyl-sn-glycero-3-phospho-(1'-sn-glycerol) = an S-1,2-diacyl-sn-glyceryl-L-cysteinyl-[prolipoprotein] + sn-glycerol 1-phosphate + H(+). The protein operates within protein modification; lipoprotein biosynthesis (diacylglyceryl transfer). Its function is as follows. Catalyzes the transfer of the diacylglyceryl group from phosphatidylglycerol to the sulfhydryl group of the N-terminal cysteine of a prolipoprotein, the first step in the formation of mature lipoproteins. The sequence is that of Phosphatidylglycerol--prolipoprotein diacylglyceryl transferase from Salmonella choleraesuis (strain SC-B67).